The sequence spans 214 residues: Large ribosomal subunit protein uL3 (214 aa).

An N5-methylglutamine modification is found at Q155.

This sequence belongs to the universal ribosomal protein uL3 family. In terms of assembly, part of the 50S ribosomal subunit. Forms a cluster with proteins L14 and L19. Post-translationally, methylated by PrmB.

One of the primary rRNA binding proteins, it binds directly near the 3'-end of the 23S rRNA, where it nucleates assembly of the 50S subunit. In Acinetobacter baumannii (strain ACICU), this protein is Large ribosomal subunit protein uL3.